The primary structure comprises 187 residues: UPF0301 protein YqgE (187 aa).

Belongs to the UPF0301 (AlgH) family.

The polypeptide is UPF0301 protein YqgE (Salmonella heidelberg (strain SL476)).